The sequence spans 376 residues: 1-acyl-sn-glycerol-3-phosphate acyltransferase gamma (376 aa).

Residues 1–124 lie on the Cytoplasmic side of the membrane; it reads MGLLAFLKTQ…LGSSKVLAKK (124 aa). The HXXXXD motif motif lies at 96–101; it reads HNFEID. Residues 125 to 145 traverse the membrane as a helical segment; that stretch reads ELLYVPLIGWTWYFLEIVFCK. Residues 146–316 are Lumenal-facing; it reads RKWEEDRDTV…TLLNFLSWAT (171 aa). Residues 317 to 339 traverse the membrane as a helical segment; the sequence is ILLSPLFSFVLGVFASGSPLLIL. At 340 to 376 the chain is on the cytoplasmic side; sequence TFLGFVGAASFGVRRLIGVTEIEKGSSYGNQEFKKKE.

It belongs to the 1-acyl-sn-glycerol-3-phosphate acyltransferase family. Widely expressed with highest levels in testis, pancreas and kidney, followed by spleen, lung, adipose tissue and liver.

It is found in the endoplasmic reticulum membrane. The protein localises to the nucleus envelope. It carries out the reaction a 1-acyl-sn-glycero-3-phosphate + an acyl-CoA = a 1,2-diacyl-sn-glycero-3-phosphate + CoA. The enzyme catalyses pentadecanoyl-CoA + 1-(9Z-octadecenoyl)-sn-glycero-3-phosphate = 1-(9Z)-octadecenoyl-2-pentadecanoyl-sn-glycero-3-phosphate + CoA. The catalysed reaction is heptadecanoyl-CoA + 1-(9Z-octadecenoyl)-sn-glycero-3-phosphate = 1-(9Z)-octadecenoyl-2-heptadecanoyl-sn-glycero-3-phosphate + CoA. It catalyses the reaction 1-(9Z-octadecenoyl)-sn-glycero-3-phosphate + octadecanoyl-CoA = 1-(9Z-octadecenoyl)-2-octadecanoyl-sn-glycero-3-phosphate + CoA. It carries out the reaction nonadecanoyl-CoA + 1-(9Z-octadecenoyl)-sn-glycero-3-phosphate = 1-(9Z)-octadecenoyl-2-nonadecanoyl-sn-glycero-3-phosphate + CoA. The enzyme catalyses 1-(9Z-octadecenoyl)-sn-glycero-3-phosphate + (5Z,8Z,11Z,14Z)-eicosatetraenoyl-CoA = 1-(9Z)-octadecenoyl-2-(5Z,8Z,11Z,14Z)-eicosatetraenoyl-sn-glycero-3-phosphate + CoA. The catalysed reaction is 1-(9Z-octadecenoyl)-sn-glycero-3-phosphate + (9Z)-octadecenoyl-CoA = 1,2-di-(9Z-octadecenoyl)-sn-glycero-3-phosphate + CoA. It catalyses the reaction 1-(9Z-octadecenoyl)-sn-glycero-3-phosphate + (9Z,12Z)-octadecadienoyl-CoA = 1-(9Z)-octadecenoyl-2-(9Z,12Z)-octadecadienoyl-sn-glycero-3-phosphate + CoA. It carries out the reaction 1-(9Z-octadecenoyl)-sn-glycero-3-phosphocholine + (5Z,8Z,11Z,14Z)-eicosatetraenoyl-CoA = 1-(9Z)-octadecenoyl-2-(5Z,8Z,11Z,14Z)-icosatetraenoyl-sn-glycero-3-phosphocholine + CoA. The enzyme catalyses 1-(9Z-octadecenoyl)-sn-glycero-3-phospho-(1D-myo-inositol) + (5Z,8Z,11Z,14Z)-eicosatetraenoyl-CoA = 1-(9Z-octadecenoyl)-2-(5Z,8Z,11Z,14Z-eicosatetraenoyl)-sn-glycero-3-phospho-1D-myo-inositol + CoA. The catalysed reaction is 1-(9Z-octadecenoyl)-sn-glycero-3-phospho-L-serine + (5Z,8Z,11Z,14Z)-eicosatetraenoyl-CoA = 1-(9Z-octadecenoyl)-2-(5Z,8Z,11Z,14Z-eicosatetraenoyl)-sn-glycero-3-phospho-L-serine + CoA. It catalyses the reaction 1-hexadecanoyl-sn-glycero-3-phosphate + (9Z)-octadecenoyl-CoA = 1-hexadecanoyl-2-(9Z-octadecenoyl)-sn-glycero-3-phosphate + CoA. It carries out the reaction 1-hexadecanoyl-sn-glycero-3-phosphate + (5Z,8Z,11Z,14Z)-eicosatetraenoyl-CoA = 1-hexadecanoyl-2-(5Z,8Z,11Z,14Z-eicosatetraenoyl)-sn-glycero-3-phosphate + CoA. The enzyme catalyses 1-heptadecanoyl-sn-glycero-3-phosphate + (5Z,8Z,11Z,14Z)-eicosatetraenoyl-CoA = 1-heptadecanoyl-2-(5Z,8Z,11Z,14Z)-eicosatetraenoyl-sn-glycero-3-phosphate + CoA. The catalysed reaction is 1-octadecanoyl-sn-glycero-3-phosphate + (9Z)-octadecenoyl-CoA = 1-octadecanoyl-2-(9Z-octadecenoyl)-sn-glycero-3-phosphate + CoA. It catalyses the reaction 1-octadecanoyl-sn-glycero-3-phosphate + (5Z,8Z,11Z,14Z)-eicosatetraenoyl-CoA = 1-octadecanoyl-2-(5Z,8Z,11Z,14Z-eicosatetraenoyl)-sn-glycero-3-phosphate + CoA. It carries out the reaction 1-(9Z-octadecenoyl)-sn-glycero-3-phosphate + hexadecanoyl-CoA = 1-hexadecanoyl-2-(9Z-octadecenoyl)-sn-glycero-3-phosphate + CoA. The enzyme catalyses 1-O-(9Z-octadecenyl)-sn-glycero-3-phosphate + (5Z,8Z,11Z,14Z)-eicosatetraenoyl-CoA = 1-O-(9Z-octadecenyl)-2-(5Z,8Z,11Z,14Z-eicosatetraenoyl)-sn-glycero-3-phosphate + CoA. The catalysed reaction is a 1-acyl-sn-glycero-3-phospho-(1D-myo-inositol) + (5Z,8Z,11Z,14Z)-eicosatetraenoyl-CoA = a 1-acyl-2-(5Z,8Z,11Z,14Z-eicosatetraenoyl)-sn-glycero-3-phospho-(1D-myo-inositol) + CoA. Its pathway is phospholipid metabolism; CDP-diacylglycerol biosynthesis; CDP-diacylglycerol from sn-glycerol 3-phosphate: step 2/3. Converts 1-acyl-sn-glycerol-3-phosphate (lysophosphatidic acid or LPA) into 1,2-diacyl-sn-glycerol-3-phosphate (phosphatidic acid or PA) by incorporating an acyl moiety at the sn-2 position of the glycerol backbone. Acts on LPA containing saturated or unsaturated fatty acids C16:0-C20:4 at the sn-1 position using C18:1, C20:4 or C18:2-CoA as the acyl donor. Also acts on lysophosphatidylcholine, lysophosphatidylinositol and lysophosphatidylserine using C18:1 or C20:4-CoA. Has a preference for arachidonoyl-CoA as a donor. Also has a modest lysophosphatidylinositol acyltransferase (LPIAT) activity, converts lysophosphatidylinositol (LPI) into phosphatidylinositol. The sequence is that of 1-acyl-sn-glycerol-3-phosphate acyltransferase gamma (AGPAT3) from Homo sapiens (Human).